The chain runs to 252 residues: uncharacterized protein (252 aa).

This is an uncharacterized protein from Rickettsia prowazekii (strain Madrid E).